The sequence spans 80 residues: Acyl carrier protein (80 aa).

The Carrier domain maps to 2 to 77; the sequence is KNIEERIKKI…KSIDFIQKKN (76 aa). Ser37 is subject to O-(pantetheine 4'-phosphoryl)serine.

It belongs to the acyl carrier protein (ACP) family. 4'-phosphopantetheine is transferred from CoA to a specific serine of apo-ACP by AcpS. This modification is essential for activity because fatty acids are bound in thioester linkage to the sulfhydryl of the prosthetic group.

Its subcellular location is the cytoplasm. It functions in the pathway lipid metabolism; fatty acid biosynthesis. In terms of biological role, carrier of the growing fatty acid chain in fatty acid biosynthesis. This Buchnera aphidicola subsp. Acyrthosiphon pisum (strain APS) (Acyrthosiphon pisum symbiotic bacterium) protein is Acyl carrier protein.